The primary structure comprises 190 residues: MTNEEELVVLADEEGNAIGTAPKATVHTTDTPLHFAFSSYILNPRGELLVTRRALSKKTWPGVWTNSMCGHPAPDETNADAIRRRGVSELGLDFGSFLDIQVVLDDYRYRAEDSSGIVEWEICPVHLVRLAVGEFVEPLPDEVEEFAWEEPQKVFDAVDATPFVFSPWMVDQLSHPELRQAILEAFDPEA.

The Mn(2+) site is built by histidine 27 and histidine 34. In terms of domain architecture, Nudix hydrolase spans 32 to 171 (PLHFAFSSYI…PFVFSPWMVD (140 aa)). Residue cysteine 69 is part of the active site. Cysteine 69 contributes to the Mg(2+) binding site. Histidine 71 contributes to the Mn(2+) binding site. Glutamate 89 contacts Mg(2+). Mn(2+)-binding residues include glutamate 119 and glutamate 121. Residue glutamate 121 is part of the active site.

This sequence belongs to the IPP isomerase type 1 family. The cofactor is Mg(2+). Mn(2+) is required as a cofactor.

The protein localises to the cytoplasm. The catalysed reaction is isopentenyl diphosphate = dimethylallyl diphosphate. It functions in the pathway isoprenoid biosynthesis; dimethylallyl diphosphate biosynthesis; dimethylallyl diphosphate from isopentenyl diphosphate: step 1/1. Catalyzes the 1,3-allylic rearrangement of the homoallylic substrate isopentenyl (IPP) to its highly electrophilic allylic isomer, dimethylallyl diphosphate (DMAPP). In Corynebacterium efficiens (strain DSM 44549 / YS-314 / AJ 12310 / JCM 11189 / NBRC 100395), this protein is Isopentenyl-diphosphate Delta-isomerase.